The sequence spans 504 residues: ATP synthase subunit alpha (504 aa).

169–176 (GDRQTGKT) is an ATP binding site.

This sequence belongs to the ATPase alpha/beta chains family. As to quaternary structure, F-type ATPases have 2 components, CF(1) - the catalytic core - and CF(0) - the membrane proton channel. CF(1) has five subunits: alpha(3), beta(3), gamma(1), delta(1), epsilon(1). CF(0) has three main subunits: a(1), b(2) and c(9-12). The alpha and beta chains form an alternating ring which encloses part of the gamma chain. CF(1) is attached to CF(0) by a central stalk formed by the gamma and epsilon chains, while a peripheral stalk is formed by the delta and b chains.

Its subcellular location is the cell membrane. It catalyses the reaction ATP + H2O + 4 H(+)(in) = ADP + phosphate + 5 H(+)(out). Produces ATP from ADP in the presence of a proton gradient across the membrane. The alpha chain is a regulatory subunit. The chain is ATP synthase subunit alpha from Clostridium kluyveri (strain NBRC 12016).